We begin with the raw amino-acid sequence, 284 residues long: Probable protein phosphatase 2C 41 (284 aa).

The PPM-type phosphatase domain maps to 35-282 (SYGFYLVRGM…DDISCVVVRF (248 aa)). 4 residues coordinate Mn(2+): Asp72, Gly73, Asp234, and Asp273.

This sequence belongs to the PP2C family. The cofactor is Mg(2+). Requires Mn(2+) as cofactor.

The catalysed reaction is O-phospho-L-seryl-[protein] + H2O = L-seryl-[protein] + phosphate. The enzyme catalyses O-phospho-L-threonyl-[protein] + H2O = L-threonyl-[protein] + phosphate. The polypeptide is Probable protein phosphatase 2C 41 (Oryza sativa subsp. japonica (Rice)).